Consider the following 334-residue polypeptide: Phenylalanine--tRNA ligase alpha subunit (334 aa).

E249 contacts Mg(2+).

It belongs to the class-II aminoacyl-tRNA synthetase family. Phe-tRNA synthetase alpha subunit type 1 subfamily. In terms of assembly, tetramer of two alpha and two beta subunits. The cofactor is Mg(2+).

It localises to the cytoplasm. It catalyses the reaction tRNA(Phe) + L-phenylalanine + ATP = L-phenylalanyl-tRNA(Phe) + AMP + diphosphate + H(+). This is Phenylalanine--tRNA ligase alpha subunit from Desulfosudis oleivorans (strain DSM 6200 / JCM 39069 / Hxd3) (Desulfococcus oleovorans).